The chain runs to 297 residues: Thiosulfate sulfurtransferase (297 aa).

Position 14 is an N6-acetyllysine; alternate (Lys-14). Lys-14 carries the post-translational modification N6-succinyllysine; alternate. One can recognise a Rhodanese 1 domain in the interval Val-25 to Ser-143. Ser-35 carries an O-linked (GlcNAc) serine glycan. Residue Ser-38 is modified to Phosphoserine. Lys-136 is subject to N6-acetyllysine; alternate. Lys-136 bears the N6-succinyllysine; alternate mark. The hinge stretch occupies residues Glu-144–Arg-159. Lys-163 bears the N6-acetyllysine mark. The region spanning Gln-173 to Arg-288 is the Rhodanese 2 domain. Lys-175 is modified (N6-acetyllysine; alternate). Lys-175 bears the N6-succinyllysine; alternate mark. Arg-187 serves as a coordination point for substrate. An N6-acetyllysine; alternate modification is found at Lys-224. Lys-224 carries the post-translational modification N6-succinyllysine; alternate. Lys-236 carries the N6-acetyllysine modification. Lys-237 is modified (N6-acetyllysine; alternate). The residue at position 237 (Lys-237) is an N6-succinyllysine; alternate. Catalysis depends on Cys-248, which acts as the Cysteine persulfide intermediate. Lys-250 provides a ligand contact to substrate.

In terms of assembly, monomer. In terms of tissue distribution, expressed in numerous tissues.

The protein resides in the mitochondrion matrix. The enzyme catalyses thiosulfate + hydrogen cyanide = thiocyanate + sulfite + 2 H(+). Together with MRPL18, acts as a mitochondrial import factor for the cytosolic 5S rRNA. Only the nascent unfolded cytoplasmic form is able to bind to the 5S rRNA. Involved in the formation of iron-sulfur complexes, cyanide detoxification or modification of sulfur-containing enzymes. Other thiol compounds, besides cyanide, can act as sulfur ion acceptors. Also has weak mercaptopyruvate sulfurtransferase (MST) activity. The chain is Thiosulfate sulfurtransferase (Tst) from Rattus norvegicus (Rat).